Reading from the N-terminus, the 451-residue chain is UPF0210 protein LMOf2365_0563 (451 aa).

Belongs to the UPF0210 family. As to quaternary structure, homodimer.

This is UPF0210 protein LMOf2365_0563 from Listeria monocytogenes serotype 4b (strain F2365).